A 245-amino-acid polypeptide reads, in one-letter code: Octanoyltransferase (245 aa).

Positions 54 to 242 (QNAPEQVWLL…AFEQIFGPTI (189 aa)) constitute a BPL/LPL catalytic domain. Substrate is bound by residues 93 to 100 (RGGEFTYH), 173 to 175 (AIG), and 186 to 188 (GVS). The active-site Acyl-thioester intermediate is Cys204.

Belongs to the LipB family.

It localises to the cytoplasm. The catalysed reaction is octanoyl-[ACP] + L-lysyl-[protein] = N(6)-octanoyl-L-lysyl-[protein] + holo-[ACP] + H(+). Its pathway is protein modification; protein lipoylation via endogenous pathway; protein N(6)-(lipoyl)lysine from octanoyl-[acyl-carrier-protein]: step 1/2. In terms of biological role, catalyzes the transfer of endogenously produced octanoic acid from octanoyl-acyl-carrier-protein onto the lipoyl domains of lipoate-dependent enzymes. Lipoyl-ACP can also act as a substrate although octanoyl-ACP is likely to be the physiological substrate. In Bartonella quintana (strain Toulouse) (Rochalimaea quintana), this protein is Octanoyltransferase.